The following is a 368-amino-acid chain: uncharacterized protein (368 aa).

This sequence belongs to the Gfo/Idh/MocA family.

This is an uncharacterized protein from Schizosaccharomyces pombe (strain 972 / ATCC 24843) (Fission yeast).